A 216-amino-acid polypeptide reads, in one-letter code: Pyridoxine/pyridoxamine 5'-phosphate oxidase (216 aa).

FMN-binding positions include 63–68, 78–79, Lys-85, and Gln-107; these read RMVLMK and YS. Lys-68 lines the substrate pocket. 2 residues coordinate substrate: Tyr-125 and Arg-129. Residues 142 to 143 and Trp-187 contribute to the FMN site; that span reads QS. 193–195 is a substrate binding site; sequence RLH. Residue Arg-197 participates in FMN binding.

It belongs to the pyridoxamine 5'-phosphate oxidase family. In terms of assembly, homodimer. FMN is required as a cofactor.

It carries out the reaction pyridoxamine 5'-phosphate + O2 + H2O = pyridoxal 5'-phosphate + H2O2 + NH4(+). The catalysed reaction is pyridoxine 5'-phosphate + O2 = pyridoxal 5'-phosphate + H2O2. The protein operates within cofactor metabolism; pyridoxal 5'-phosphate salvage; pyridoxal 5'-phosphate from pyridoxamine 5'-phosphate: step 1/1. Its pathway is cofactor metabolism; pyridoxal 5'-phosphate salvage; pyridoxal 5'-phosphate from pyridoxine 5'-phosphate: step 1/1. In terms of biological role, catalyzes the oxidation of either pyridoxine 5'-phosphate (PNP) or pyridoxamine 5'-phosphate (PMP) into pyridoxal 5'-phosphate (PLP). This chain is Pyridoxine/pyridoxamine 5'-phosphate oxidase, found in Bradyrhizobium sp. (strain ORS 278).